The primary structure comprises 968 residues: Isoleucine--tRNA ligase (968 aa).

Positions 68–78 match the 'HIGH' region motif; the sequence is PYANGALHMGH. An L-isoleucyl-5'-AMP-binding site is contributed by E584. The short motif at 625–629 is the 'KMSKS' region element; the sequence is KMSKS. ATP is bound at residue K628. Residues C938, C941, C958, and C961 each contribute to the Zn(2+) site.

Belongs to the class-I aminoacyl-tRNA synthetase family. IleS type 1 subfamily. In terms of assembly, monomer. The cofactor is Zn(2+).

The protein localises to the cytoplasm. It carries out the reaction tRNA(Ile) + L-isoleucine + ATP = L-isoleucyl-tRNA(Ile) + AMP + diphosphate. Its function is as follows. Catalyzes the attachment of isoleucine to tRNA(Ile). As IleRS can inadvertently accommodate and process structurally similar amino acids such as valine, to avoid such errors it has two additional distinct tRNA(Ile)-dependent editing activities. One activity is designated as 'pretransfer' editing and involves the hydrolysis of activated Val-AMP. The other activity is designated 'posttransfer' editing and involves deacylation of mischarged Val-tRNA(Ile). In Prochlorococcus marinus (strain MIT 9313), this protein is Isoleucine--tRNA ligase.